We begin with the raw amino-acid sequence, 219 residues long: Formate dehydrogenase 2 subunit beta (cytochrome c-553) (219 aa).

The 4Fe-4S ferredoxin-type 1 domain occupies 3 to 32 (KAFLIDTTRCTACRGCQLACKEWHDLPANV). 12 residues coordinate [4Fe-4S] cluster: cysteine 12, cysteine 15, cysteine 18, cysteine 22, cysteine 74, cysteine 77, cysteine 82, cysteine 124, cysteine 141, cysteine 144, cysteine 156, and cysteine 160. The 4Fe-4S ferredoxin-type 2 domain maps to 132-171 (DPKTKRITKCDMCFDRVSAGMQPICVKTCPTGTMAFGERD).

As to quaternary structure, heterotrimer of cytochrome c3 FDH2C and formate dehydrogenase FDH2 alpha and beta subunits that forms the FdhABC(3) complex. It depends on [4Fe-4S] cluster as a cofactor.

It is found in the periplasm. Functionally, beta chain of the formate dehydrogenase (FDH) that catalyzes the reversible two-electron oxidation of formate to carbon dioxide. The beta chain is an electron transfer unit. This Nitratidesulfovibrio vulgaris (strain ATCC 29579 / DSM 644 / CCUG 34227 / NCIMB 8303 / VKM B-1760 / Hildenborough) (Desulfovibrio vulgaris) protein is Formate dehydrogenase 2 subunit beta (cytochrome c-553).